We begin with the raw amino-acid sequence, 366 residues long: tRNA/tmRNA (uracil-C(5))-methyltransferase (366 aa).

S-adenosyl-L-methionine-binding residues include Q190, Y218, N223, E239, and D299. C324 serves as the catalytic Nucleophile. The active-site Proton acceptor is the E358.

The protein belongs to the class I-like SAM-binding methyltransferase superfamily. RNA M5U methyltransferase family. TrmA subfamily.

It carries out the reaction uridine(54) in tRNA + S-adenosyl-L-methionine = 5-methyluridine(54) in tRNA + S-adenosyl-L-homocysteine + H(+). The catalysed reaction is uridine(341) in tmRNA + S-adenosyl-L-methionine = 5-methyluridine(341) in tmRNA + S-adenosyl-L-homocysteine + H(+). In terms of biological role, dual-specificity methyltransferase that catalyzes the formation of 5-methyluridine at position 54 (m5U54) in all tRNAs, and that of position 341 (m5U341) in tmRNA (transfer-mRNA). The sequence is that of tRNA/tmRNA (uracil-C(5))-methyltransferase from Salmonella agona (strain SL483).